The sequence spans 405 residues: CLIP domain-containing serine protease B8 (405 aa).

Residues 1–24 form the signal peptide; sequence MSSAVLLLLVCGCALAVLSPVAYG. Cystine bridges form between Cys41/Cys94, Cys52/Cys84, and Cys58/Cys95. In terms of domain architecture, Clip spans 41-95; the sequence is CDIPNEPNPGQCMLPAECVAYGKINDVSSLSSIERFSFIKQIQCNGSDTVPYVCC. Asn85 and Asn108 each carry an N-linked (GlcNAc...) asparagine glycan. Residues 137-404 form the Peptidase S1 domain; it reads IRGGQLAEID…YLPWIKMYTG (268 aa). The cysteines at positions 167 and 183 are disulfide-linked. Residues His182 and Asp249 each act as charge relay system in the active site. 2 disulfides stabilise this stretch: Cys322/Cys339 and Cys349/Cys380. The Charge relay system role is filled by Ser353.

This sequence belongs to the peptidase S1 family. CLIP subfamily. Proteolytic cleavage is necessary for activation. Cleaved and activated by CLIPB4.

It is found in the secreted. Serine protease that functions in the melanization-mediated immune response. Preferentially, cleaves substrates with an arginine at the P1 site. May be involved in the activation of the prophenoloxidase cascade upstream of CLIPB9; does not cleave prophenoloxidase. The sequence is that of CLIP domain-containing serine protease B8 from Anopheles gambiae (African malaria mosquito).